Here is a 134-residue protein sequence, read N- to C-terminus: Small ribosomal subunit protein uS8c (134 aa).

It belongs to the universal ribosomal protein uS8 family. As to quaternary structure, part of the 30S ribosomal subunit.

Its subcellular location is the plastid. The protein resides in the chloroplast. One of the primary rRNA binding proteins, it binds directly to 16S rRNA central domain where it helps coordinate assembly of the platform of the 30S subunit. This chain is Small ribosomal subunit protein uS8c (rps8), found in Populus alba (White poplar).